Reading from the N-terminus, the 163-residue chain is Probable chemoreceptor glutamine deamidase CheD (163 aa).

The protein belongs to the CheD family.

The catalysed reaction is L-glutaminyl-[protein] + H2O = L-glutamyl-[protein] + NH4(+). Functionally, probably deamidates glutamine residues to glutamate on methyl-accepting chemotaxis receptors (MCPs), playing an important role in chemotaxis. In Borrelia turicatae (strain 91E135), this protein is Probable chemoreceptor glutamine deamidase CheD.